The primary structure comprises 113 residues: Na(+)/H(+) antiporter subunit C1 (113 aa).

3 helical membrane passes run 1-21, 28-48, and 72-92; these read MEIIMIFVSGILTAISVYLVL, IVMGTTLLTHAANLFLITMGG, and LILTAIVIAFATTAFFLVLAF.

It belongs to the CPA3 antiporters (TC 2.A.63) subunit C family. May form a heterooligomeric complex that consists of seven subunits: mnhA1, mnhB1, mnhC1, mnhD1, mnhE1, mnhF1 and mnhG1.

The protein resides in the cell membrane. In terms of biological role, mnh complex is a Na(+)/H(+) antiporter involved in Na(+) excretion. In Staphylococcus aureus (strain JH1), this protein is Na(+)/H(+) antiporter subunit C1 (mnhC1).